Consider the following 432-residue polypeptide: Asparagine--tRNA ligase (432 aa).

This sequence belongs to the class-II aminoacyl-tRNA synthetase family. Homodimer.

The protein localises to the cytoplasm. The catalysed reaction is tRNA(Asn) + L-asparagine + ATP = L-asparaginyl-tRNA(Asn) + AMP + diphosphate + H(+). The chain is Asparagine--tRNA ligase from Lacticaseibacillus paracasei (strain ATCC 334 / BCRC 17002 / CCUG 31169 / CIP 107868 / KCTC 3260 / NRRL B-441) (Lactobacillus paracasei).